We begin with the raw amino-acid sequence, 103 residues long: uncharacterized protein (103 aa).

The helical transmembrane segment at 37–57 (FILLSSLLIGGLLITIACYHI) threads the bilayer.

It is found in the membrane. This is an uncharacterized protein from Saccharomyces cerevisiae (strain ATCC 204508 / S288c) (Baker's yeast).